A 42-amino-acid polypeptide reads, in one-letter code: Photosystem I reaction center subunit IX (42 aa).

Residues 8-28 (YLSTAPVIGVLWMTFTAGFII) form a helical membrane-spanning segment.

The protein belongs to the PsaJ family.

The protein resides in the plastid. It is found in the chloroplast thylakoid membrane. Its function is as follows. May help in the organization of the PsaE and PsaF subunits. This Pyropia yezoensis (Susabi-nori) protein is Photosystem I reaction center subunit IX.